A 313-amino-acid chain; its full sequence is Protein FixB (313 aa).

255-283 (LYLAVGISGQIQHMVGANASQTIFAINKD) contacts FAD.

Belongs to the ETF alpha-subunit/FixB family. Heterodimer of FixA and FixB.

It functions in the pathway amine and polyamine metabolism; carnitine metabolism. In terms of biological role, required for anaerobic carnitine reduction. May bring reductant to CaiA. The polypeptide is Protein FixB (Escherichia coli O17:K52:H18 (strain UMN026 / ExPEC)).